The chain runs to 648 residues: Serine/threonine-protein kinase DCLK3 (648 aa).

Disordered regions lie at residues Asp-86 to Val-127 and Gln-150 to Met-345. Composition is skewed to basic and acidic residues over residues Gly-98–Val-127, Glu-213–Ser-234, Glu-255–Pro-266, Leu-277–Pro-303, and Thr-312–Ser-338. Residues Tyr-356 to Ile-613 enclose the Protein kinase domain. ATP-binding positions include Ile-362–Val-370 and Lys-385. Asp-477 acts as the Proton acceptor in catalysis. Residues Val-628–Ser-648 form a disordered region.

This sequence belongs to the protein kinase superfamily. CAMK Ser/Thr protein kinase family. CaMK subfamily.

The protein localises to the cytoplasm. The protein resides in the nucleus. It catalyses the reaction L-seryl-[protein] + ATP = O-phospho-L-seryl-[protein] + ADP + H(+). The enzyme catalyses L-threonyl-[protein] + ATP = O-phospho-L-threonyl-[protein] + ADP + H(+). The sequence is that of Serine/threonine-protein kinase DCLK3 (DCLK3) from Homo sapiens (Human).